A 152-amino-acid chain; its full sequence is Calmodulin (152 aa).

Position 2 is an N-acetylalanine (alanine 2). EF-hand domains lie at 10–45 (EQIAEFKEAFSLFDKDGDGSITTKELGTVMRSLGQN), 46–81 (PTEAELQDMINEVDADGNGNIDFPEFLTMMARKMQD), 83–118 (DTEEEIREAFKVFDKDGNGYISAAELRHVMTSLGEK), and 119–152 (LTNEEVDEMIREADLDGDGQVNYDEFVKMMIVRN). Ca(2+) is bound by residues aspartate 23, aspartate 25, aspartate 27, serine 29, glutamate 34, aspartate 59, aspartate 61, asparagine 63, asparagine 65, glutamate 70, aspartate 96, aspartate 98, asparagine 100, tyrosine 102, glutamate 107, aspartate 132, aspartate 134, aspartate 136, glutamine 138, and glutamate 143.

Belongs to the calmodulin family. In terms of assembly, interacts with cmbB, numA/nucleomorphin, pgkA/phosphoglycerate kinase, and thyB/thymidine kinase in the presence of Ca(2+). Interacts with dwwA in the absence of Ca(2+). The N-terminus is blocked. Post-translationally, trimethylation of Lys-118 observed in other calmodulins is absent here.

The protein localises to the contractile vacuole. In terms of biological role, calmodulin mediates the control of a large number of enzymes, ion channels and other proteins by Ca(2+). Among the enzymes to be stimulated by the calmodulin-Ca(2+) complex are a number of protein kinases and phosphatases. The sequence is that of Calmodulin (calA) from Dictyostelium discoideum (Social amoeba).